The primary structure comprises 143 residues: Hemoglobin subunit alpha-1 (143 aa).

Ser-2 carries the post-translational modification N-acetylserine. Positions 2–143 constitute a Globin domain; that stretch reads SLSSKDKATV…RALALAEKYR (142 aa). His-60 is a binding site for O2. A heme b-binding site is contributed by His-89.

Belongs to the globin family. Hb 1 is a heterotetramer of two alpha-1 and two beta-1 chains. Hb 3 is a heterotetramer of two alpha-1 and two beta-2 chains. Red blood cells.

Its function is as follows. Involved in oxygen transport from gills to the various peripheral tissues. The chain is Hemoglobin subunit alpha-1 (hba1) from Gadus morhua (Atlantic cod).